The following is a 532-amino-acid chain: Chaperonin GroEL 2 (532 aa).

Residues Thr30–Pro33, Lys51, Asp87–Thr91, Gly415, Asn479–Ala481, and Asp495 contribute to the ATP site.

The protein belongs to the chaperonin (HSP60) family. In terms of assembly, forms a cylinder of 14 subunits composed of two heptameric rings stacked back-to-back. Interacts with the co-chaperonin GroES.

The protein localises to the cytoplasm. The enzyme catalyses ATP + H2O + a folded polypeptide = ADP + phosphate + an unfolded polypeptide.. Its function is as follows. Together with its co-chaperonin GroES, plays an essential role in assisting protein folding. The GroEL-GroES system forms a nano-cage that allows encapsulation of the non-native substrate proteins and provides a physical environment optimized to promote and accelerate protein folding. This is Chaperonin GroEL 2 from Vibrio parahaemolyticus serotype O3:K6 (strain RIMD 2210633).